Consider the following 199-residue polypeptide: Pyridoxine/pyridoxamine 5'-phosphate oxidase (199 aa).

Residues 44–49 (RTVLLK), 59–60 (YT), K66, and Q91 contribute to the FMN site. K49 lines the substrate pocket. Substrate contacts are provided by Y109, R113, and S117. Residues 126–127 (QS) and W171 contribute to the FMN site. 177-179 (RLH) is a binding site for substrate. R181 lines the FMN pocket.

It belongs to the pyridoxamine 5'-phosphate oxidase family. As to quaternary structure, homodimer. Requires FMN as cofactor.

The catalysed reaction is pyridoxamine 5'-phosphate + O2 + H2O = pyridoxal 5'-phosphate + H2O2 + NH4(+). It carries out the reaction pyridoxine 5'-phosphate + O2 = pyridoxal 5'-phosphate + H2O2. It participates in cofactor metabolism; pyridoxal 5'-phosphate salvage; pyridoxal 5'-phosphate from pyridoxamine 5'-phosphate: step 1/1. The protein operates within cofactor metabolism; pyridoxal 5'-phosphate salvage; pyridoxal 5'-phosphate from pyridoxine 5'-phosphate: step 1/1. In terms of biological role, catalyzes the oxidation of either pyridoxine 5'-phosphate (PNP) or pyridoxamine 5'-phosphate (PMP) into pyridoxal 5'-phosphate (PLP). This chain is Pyridoxine/pyridoxamine 5'-phosphate oxidase, found in Xanthomonas axonopodis pv. citri (strain 306).